A 61-amino-acid chain; its full sequence is Photosystem II reaction center protein K (61 aa).

A propeptide spanning residues 1–24 (MLNILNLICICLNFALYSSSFFFT) is cleaved from the precursor. The helical transmembrane segment at 40-60 (MPVIPLFFFLLAFVWQAAVSF) threads the bilayer.

Belongs to the PsbK family. In terms of assembly, PSII is composed of 1 copy each of membrane proteins PsbA, PsbB, PsbC, PsbD, PsbE, PsbF, PsbH, PsbI, PsbJ, PsbK, PsbL, PsbM, PsbT, PsbX, PsbY, PsbZ, Psb30/Ycf12, at least 3 peripheral proteins of the oxygen-evolving complex and a large number of cofactors. It forms dimeric complexes.

It is found in the plastid. The protein resides in the chloroplast thylakoid membrane. Functionally, one of the components of the core complex of photosystem II (PSII). PSII is a light-driven water:plastoquinone oxidoreductase that uses light energy to abstract electrons from H(2)O, generating O(2) and a proton gradient subsequently used for ATP formation. It consists of a core antenna complex that captures photons, and an electron transfer chain that converts photonic excitation into a charge separation. This is Photosystem II reaction center protein K from Populus alba (White poplar).